Here is a 310-residue protein sequence, read N- to C-terminus: Protein N-terminal asparagine amidohydrolase (310 aa).

Monomer.

It is found in the cytoplasm. It catalyses the reaction N-terminal L-asparaginyl-[protein] + H2O + H(+) = N-terminal L-aspartyl-[protein] + NH4(+). In terms of biological role, N-terminal asparagine deamidase that mediates deamidation of N-terminal asparagine residues to aspartate. Required for the ubiquitin-dependent turnover of intracellular proteins that initiate with Met-Asn. These proteins are acetylated on the retained initiator methionine and can subsequently be modified by the removal of N-acetyl methionine by acylaminoacid hydrolase (AAH). Conversion of the resulting N-terminal asparagine to aspartate by NTAN1/PNAD renders the protein susceptible to arginylation, polyubiquitination and degradation as specified by the N-end rule. This enzyme does not act on substrates with internal or C-terminal asparagines and does not act on glutamine residues in any position. The polypeptide is Protein N-terminal asparagine amidohydrolase (Mus musculus (Mouse)).